The primary structure comprises 623 residues: Lamin-B2.L (623 aa).

Residues 1-18 (MATTTPSRSTRSSMQSPA) are compositionally biased toward low complexity. The tract at residues 1–30 (MATTTPSRSTRSSMQSPARGTSTPLSPTRI) is disordered. Residues 2-27 (ATTTPSRSTRSSMQSPARGTSTPLSP) form a head region. Residues 19 to 30 (RGTSTPLSPTRI) are compositionally biased toward polar residues. At Ser26 the chain carries Phosphoserine. Residues 28–64 (TRISRLQEKEELRHLNDRLAVYIDRVRALELENDRLM) are coil 1A. Positions 35 to 391 (EKEELRHLND…KLLEGEEERL (357 aa)) constitute an IF rod domain. The interval 64–74 (MVKISEKEEVT) is linker 1. The tract at residues 75-211 (TREVSGIKNL…QSLQEEMDFR (137 aa)) is coil 1B. Positions 212-235 (KNIYEEESRETRKRHERRIVEVDR) are linker 2. Residues 236-378 (GHHYDYESKL…VKLALDLEIN (143 aa)) form a coil 2 region. The segment at 380–592 (YRKLLEGEEE…VTKSVLRNVE (213 aa)) is tail. Disordered stretches follow at residues 388 to 473 (EERL…LSQQ) and 591 to 623 (VEEE…CSVM). At Ser396 the chain carries Phosphoserine. Residues 398 to 416 (ESRVTVSRATSSSSSATRT) are compositionally biased toward low complexity. Residues 420-425 (KRRRVE) carry the Nuclear localization signal motif. Positions 443–473 (LGSSRITASEGSSRTITSGQSSTTRFHLSQQ) are enriched in polar residues. The 118-residue stretch at 468 to 585 (FHLSQQASAT…EEVAVRTVTK (118 aa)) folds into the LTD domain. Positions 592–604 (EEEEDEDADFGEE) are enriched in acidic residues. Positions 612 to 623 (DPRTTSRGCSVM) are enriched in polar residues. Cys620 is modified (cysteine methyl ester). Cys620 carries the S-farnesyl cysteine lipid modification. Positions 621 to 623 (SVM) are cleaved as a propeptide — removed in mature form.

Belongs to the intermediate filament family. Post-translationally, phosphorylation plays a key role in lamin organization, subcellular localization and nuclear envelope disintegration. Phosphorylation by CDK1 at Ser-26 at the onset of mitosis drives lamin disassembly and nuclear envelope breakdown.

It is found in the nucleus lamina. Its subcellular location is the nucleus envelope. The protein resides in the nucleus. The protein localises to the nucleoplasm. It localises to the nucleus matrix. Functionally, lamins are intermediate filament proteins that assemble into a filamentous meshwork, and which constitute the major components of the nuclear lamina, a fibrous layer on the nucleoplasmic side of the inner nuclear membrane. Lamins provide a framework for the nuclear envelope, bridging the nuclear envelope and chromatin, thereby playing an important role in nuclear assembly, chromatin organization, nuclear membrane and telomere dynamics. The structural integrity of the lamina is strictly controlled by the cell cycle, as seen by the disintegration and formation of the nuclear envelope in prophase and telophase, respectively. This is Lamin-B2.L (lmnb2.L) from Xenopus laevis (African clawed frog).